The primary structure comprises 246 residues: 3-deoxy-manno-octulosonate cytidylyltransferase (246 aa).

It belongs to the KdsB family.

The protein localises to the cytoplasm. The enzyme catalyses 3-deoxy-alpha-D-manno-oct-2-ulosonate + CTP = CMP-3-deoxy-beta-D-manno-octulosonate + diphosphate. The protein operates within nucleotide-sugar biosynthesis; CMP-3-deoxy-D-manno-octulosonate biosynthesis; CMP-3-deoxy-D-manno-octulosonate from 3-deoxy-D-manno-octulosonate and CTP: step 1/1. It functions in the pathway bacterial outer membrane biogenesis; lipopolysaccharide biosynthesis. Activates KDO (a required 8-carbon sugar) for incorporation into bacterial lipopolysaccharide in Gram-negative bacteria. This chain is 3-deoxy-manno-octulosonate cytidylyltransferase, found in Leptospira borgpetersenii serovar Hardjo-bovis (strain JB197).